Here is a 445-residue protein sequence, read N- to C-terminus: Hydroxymethylglutaryl-CoA synthase (445 aa).

Position 31 (D31) interacts with (3S)-3-hydroxy-3-methylglutaryl-CoA. E83 serves as the catalytic Proton donor/acceptor. (3S)-3-hydroxy-3-methylglutaryl-CoA contacts are provided by C120, T163, S211, H244, K253, N328, and S364. The active-site Acyl-thioester intermediate is C120. H244 functions as the Proton donor/acceptor in the catalytic mechanism.

The protein belongs to the thiolase-like superfamily. HMG-CoA synthase family.

It catalyses the reaction acetoacetyl-CoA + acetyl-CoA + H2O = (3S)-3-hydroxy-3-methylglutaryl-CoA + CoA + H(+). The protein operates within metabolic intermediate biosynthesis; (R)-mevalonate biosynthesis; (R)-mevalonate from acetyl-CoA: step 2/3. In contrast to bacterial and eukaryotic HMG-CoA synthases, is insensitive to feedback substrate inhibition by acetoacetyl-CoA. Enzymatic activity is inhibited by hymeglusin, which also blocks the propagation of H.volcanii cells in vivo, indicating the critical role that the mevalonate pathway plays in isoprenoid biosynthesis by these archaea. Catalyzes the condensation of acetyl-CoA with acetoacetyl-CoA to form 3-hydroxy-3-methylglutaryl-CoA (HMG-CoA). Functions in the mevalonate (MVA) pathway leading to isopentenyl diphosphate (IPP), a key precursor for the biosynthesis of isoprenoid compounds such as archaeal membrane lipids. The protein is Hydroxymethylglutaryl-CoA synthase (hmgB) of Haloferax volcanii (strain ATCC 29605 / DSM 3757 / JCM 8879 / NBRC 14742 / NCIMB 2012 / VKM B-1768 / DS2) (Halobacterium volcanii).